The chain runs to 605 residues: Sodium-independent sulfate anion transporter (605 aa).

Residues Met-1 to Asp-50 are Extracellular-facing. The chain crosses the membrane as a helical span at residues Phe-51–Val-71. Position 72 (Ala-72) is a topological domain, cytoplasmic. The helical transmembrane segment at Gly-73 to Leu-93 threads the bilayer. Residues Gly-94 to Asp-98 lie on the Extracellular side of the membrane. A helical membrane pass occupies residues Val-99 to Pro-119. Over Ala-120–Ala-122 the chain is Cytoplasmic. The chain crosses the membrane as a helical span at residues Val-123 to Phe-143. At Leu-144–Asp-146 the chain is on the extracellular side. The helical transmembrane segment at Phe-147–Gly-167 threads the bilayer. The Cytoplasmic portion of the chain corresponds to Gln-168–Thr-196. The chain crosses the membrane as a helical span at residues Arg-197 to Met-217. Residues Arg-218–Leu-249 are Extracellular-facing. The chain crosses the membrane as a helical span at residues Val-250–Ile-270. Residues Leu-271–Gln-303 are Cytoplasmic-facing. The chain crosses the membrane as a helical span at residues Asp-304–Ala-324. The Extracellular portion of the chain corresponds to Lys-325–Glu-340. The helical transmembrane segment at Leu-341 to Gly-361 threads the bilayer. Residues Ser-362–Gly-373 are Cytoplasmic-facing. Residues Val-374–Leu-394 form a helical membrane-spanning segment. The Extracellular segment spans residues Thr-395–Leu-397. Residues Phe-398–Phe-418 form a helical membrane-spanning segment. Residues Asp-419 to Glu-447 are Cytoplasmic-facing. A helical transmembrane segment spans residues Val-448–Ala-468. The Extracellular portion of the chain corresponds to Arg-469–Ala-605. An STAS domain is found at Val-479 to Glu-582.

This sequence belongs to the SLC26A/SulP transporter (TC 2.A.53) family.

It localises to the cell membrane. The protein localises to the lysosome membrane. It is found in the apical cell membrane. Its subcellular location is the basolateral cell membrane. The catalysed reaction is hydrogencarbonate(in) + chloride(out) = hydrogencarbonate(out) + chloride(in). It catalyses the reaction sulfate(in) + H(+)(in) = sulfate(out) + H(+)(out). The enzyme catalyses oxalate(in) + chloride(out) = oxalate(out) + chloride(in). Its function is as follows. Sodium-independent anion exchanger mediating bicarbonate, chloride, sulfate and oxalate transport. Exhibits sodium-independent sulfate anion transporter activity that may cooperate with SLC26A2 to mediate DIDS-sensitive sulfate uptake into high endothelial venules endothelial cells (HEVEC). In the kidney, mediates chloride-bicarbonate exchange, facilitating V-ATPase-mediated acid secretion. May function as a chloride channel, playing an important role in moderating chloride homeostasis and neuronal activity in the cerebellum. The chain is Sodium-independent sulfate anion transporter (Slc26a11) from Cavia porcellus (Guinea pig).